A 513-amino-acid chain; its full sequence is ATP synthase subunit alpha (513 aa).

Residue 169 to 176 participates in ATP binding; the sequence is GDRQTGKT.

Belongs to the ATPase alpha/beta chains family. F-type ATPases have 2 components, CF(1) - the catalytic core - and CF(0) - the membrane proton channel. CF(1) has five subunits: alpha(3), beta(3), gamma(1), delta(1), epsilon(1). CF(0) has three main subunits: a(1), b(2) and c(9-12). The alpha and beta chains form an alternating ring which encloses part of the gamma chain. CF(1) is attached to CF(0) by a central stalk formed by the gamma and epsilon chains, while a peripheral stalk is formed by the delta and b chains.

It is found in the cell inner membrane. It catalyses the reaction ATP + H2O + 4 H(+)(in) = ADP + phosphate + 5 H(+)(out). Produces ATP from ADP in the presence of a proton gradient across the membrane. The alpha chain is a regulatory subunit. This is ATP synthase subunit alpha from Bordetella pertussis (strain Tohama I / ATCC BAA-589 / NCTC 13251).